Reading from the N-terminus, the 397-residue chain is Probable pyruvate dehydrogenase E1 component subunit alpha, mitochondrial (397 aa).

Pyruvate contacts are provided by His-86, Tyr-112, Arg-113, Gly-159, Val-161, Asp-190, Gly-191, Ala-192, and Asn-219. 9 residues coordinate thiamine diphosphate: Tyr-112, Arg-113, Gly-159, Val-161, Asp-190, Gly-191, Ala-192, Asn-219, and His-286. Residue Asp-190 coordinates Mg(2+). Asn-219 is a binding site for Mg(2+).

As to quaternary structure, tetramer of 2 alpha and 2 beta subunits. Requires thiamine diphosphate as cofactor. The cofactor is Mg(2+).

Its subcellular location is the mitochondrion matrix. It carries out the reaction N(6)-[(R)-lipoyl]-L-lysyl-[protein] + pyruvate + H(+) = N(6)-[(R)-S(8)-acetyldihydrolipoyl]-L-lysyl-[protein] + CO2. E1 activity is regulated by phosphorylation (inactivation) and dephosphorylation (activation) of the alpha subunit. Its function is as follows. The pyruvate dehydrogenase complex catalyzes the overall conversion of pyruvate to acetyl-CoA and CO(2). It contains multiple copies of three enzymatic components: pyruvate dehydrogenase (E1), dihydrolipoamide acetyltransferase (E2) and lipoamide dehydrogenase (E3). This chain is Probable pyruvate dehydrogenase E1 component subunit alpha, mitochondrial, found in Caenorhabditis elegans.